Consider the following 322-residue polypeptide: 4-hydroxy-3-methylbut-2-enyl diphosphate reductase (322 aa).

Cys-12 contributes to the [4Fe-4S] cluster binding site. 2 residues coordinate (2E)-4-hydroxy-3-methylbut-2-enyl diphosphate: His-43 and His-81. Dimethylallyl diphosphate-binding residues include His-43 and His-81. Isopentenyl diphosphate-binding residues include His-43 and His-81. Residue Cys-103 participates in [4Fe-4S] cluster binding. (2E)-4-hydroxy-3-methylbut-2-enyl diphosphate is bound at residue His-131. His-131 is a binding site for dimethylallyl diphosphate. Residue His-131 participates in isopentenyl diphosphate binding. Glu-133 serves as the catalytic Proton donor. Thr-172 provides a ligand contact to (2E)-4-hydroxy-3-methylbut-2-enyl diphosphate. [4Fe-4S] cluster is bound at residue Cys-200. Residues Ser-228, Asn-230, and Ser-273 each coordinate (2E)-4-hydroxy-3-methylbut-2-enyl diphosphate. 3 residues coordinate dimethylallyl diphosphate: Ser-228, Asn-230, and Ser-273. Ser-228, Asn-230, and Ser-273 together coordinate isopentenyl diphosphate.

This sequence belongs to the IspH family. The cofactor is [4Fe-4S] cluster.

It carries out the reaction isopentenyl diphosphate + 2 oxidized [2Fe-2S]-[ferredoxin] + H2O = (2E)-4-hydroxy-3-methylbut-2-enyl diphosphate + 2 reduced [2Fe-2S]-[ferredoxin] + 2 H(+). The catalysed reaction is dimethylallyl diphosphate + 2 oxidized [2Fe-2S]-[ferredoxin] + H2O = (2E)-4-hydroxy-3-methylbut-2-enyl diphosphate + 2 reduced [2Fe-2S]-[ferredoxin] + 2 H(+). The protein operates within isoprenoid biosynthesis; dimethylallyl diphosphate biosynthesis; dimethylallyl diphosphate from (2E)-4-hydroxy-3-methylbutenyl diphosphate: step 1/1. Its pathway is isoprenoid biosynthesis; isopentenyl diphosphate biosynthesis via DXP pathway; isopentenyl diphosphate from 1-deoxy-D-xylulose 5-phosphate: step 6/6. Its function is as follows. Catalyzes the conversion of 1-hydroxy-2-methyl-2-(E)-butenyl 4-diphosphate (HMBPP) into a mixture of isopentenyl diphosphate (IPP) and dimethylallyl diphosphate (DMAPP). Acts in the terminal step of the DOXP/MEP pathway for isoprenoid precursor biosynthesis. The sequence is that of 4-hydroxy-3-methylbut-2-enyl diphosphate reductase from Macrococcus caseolyticus (strain JCSC5402) (Macrococcoides caseolyticum).